The primary structure comprises 526 residues: Bifunctional purine biosynthesis protein PurH (526 aa).

The region spanning 1 to 145 (MSKAPLALLS…KNHAHVGIVT (145 aa)) is the MGS-like domain.

Belongs to the PurH family.

It carries out the reaction (6R)-10-formyltetrahydrofolate + 5-amino-1-(5-phospho-beta-D-ribosyl)imidazole-4-carboxamide = 5-formamido-1-(5-phospho-D-ribosyl)imidazole-4-carboxamide + (6S)-5,6,7,8-tetrahydrofolate. The enzyme catalyses IMP + H2O = 5-formamido-1-(5-phospho-D-ribosyl)imidazole-4-carboxamide. It functions in the pathway purine metabolism; IMP biosynthesis via de novo pathway; 5-formamido-1-(5-phospho-D-ribosyl)imidazole-4-carboxamide from 5-amino-1-(5-phospho-D-ribosyl)imidazole-4-carboxamide (10-formyl THF route): step 1/1. It participates in purine metabolism; IMP biosynthesis via de novo pathway; IMP from 5-formamido-1-(5-phospho-D-ribosyl)imidazole-4-carboxamide: step 1/1. The chain is Bifunctional purine biosynthesis protein PurH from Psychrobacter arcticus (strain DSM 17307 / VKM B-2377 / 273-4).